We begin with the raw amino-acid sequence, 297 residues long: MNADLTVVSPQIQAQILAEALPYIRKFHGKTIVVKYGGNAMTEERLKHSFARDVILLKLVGMNPVVVHGGGPQIDNALKKIGKQGTFIQGMRITDEETMEVVEWVLGGEVQQDIVMLINHYGGQAVGLTGKDGGLIRARKMNMPDRENPGKFLDIGFVGDIEAINPAVVKALQDDAFIPIISPIGFGDDGQAYNINADVVAGKIAEILRAEKLIMMTNIAGVQDKQGNLLTDLSAREIDEMFEDGTISGGMLPKISSALDAAKSGVNTVHIIDGRIEHSLLLEVLTEQAFGTMIRSH.

Substrate contacts are provided by residues 70–71 (GG), R92, and N194.

Belongs to the acetylglutamate kinase family. ArgB subfamily.

The protein resides in the cytoplasm. The catalysed reaction is N-acetyl-L-glutamate + ATP = N-acetyl-L-glutamyl 5-phosphate + ADP. The protein operates within amino-acid biosynthesis; L-arginine biosynthesis; N(2)-acetyl-L-ornithine from L-glutamate: step 2/4. Functionally, catalyzes the ATP-dependent phosphorylation of N-acetyl-L-glutamate. This is Acetylglutamate kinase from Herminiimonas arsenicoxydans.